The sequence spans 196 residues: MKVNPNNIELIISAVKEDQYPETELSEVALSGRSNVGKSTFINSMIGRKNMARTSQQPGKTQTLNFYNIDEQLIFVDVPGYGYAKVSKTQREKFGKMIEEYITKRENLQLVIQLVDLRHDPTQDDILMYNYLKHFDIPTLVICTKEDKIPKGKVQKHIKNIKTQLDMDPDDTIVSYSSIQNNKQQQIWNLIEPYIS.

The region spanning 24 to 196 (ELSEVALSGR…IWNLIEPYIS (173 aa)) is the EngB-type G domain. GTP is bound by residues 32–39 (GRSNVGKS), 59–63 (GKTQT), 77–80 (DVPG), 144–147 (TKED), and 176–178 (YSS). The Mg(2+) site is built by serine 39 and threonine 61.

The protein belongs to the TRAFAC class TrmE-Era-EngA-EngB-Septin-like GTPase superfamily. EngB GTPase family. It depends on Mg(2+) as a cofactor.

Necessary for normal cell division and for the maintenance of normal septation. The protein is Probable GTP-binding protein EngB of Staphylococcus aureus (strain MRSA252).